Consider the following 232-residue polypeptide: Beta-casein (232 aa).

Residues Met1–Ala15 form the signal peptide. N-linked (GlcNAc...) asparagine glycosylation occurs at Asn22. Ser24 is modified (phosphoserine). Thr27 carries the phosphothreonine modification. A phosphoserine mark is found at Ser30, Ser32, Ser33, and Ser34. Positions Lys48 to Asn63 are enriched in basic and acidic residues. The tract at residues Lys48–Leu74 is disordered.

It belongs to the beta-casein family. Mammary gland specific. Secreted in milk.

It localises to the secreted. In terms of biological role, important role in determination of the surface properties of the casein micelles. The chain is Beta-casein (CSN2) from Sus scrofa (Pig).